Consider the following 309-residue polypeptide: Homoserine kinase (309 aa).

91–101 is an ATP binding site; that stretch reads PIGSGLGSSAC.

Belongs to the GHMP kinase family. Homoserine kinase subfamily.

The protein resides in the cytoplasm. It carries out the reaction L-homoserine + ATP = O-phospho-L-homoserine + ADP + H(+). It participates in amino-acid biosynthesis; L-threonine biosynthesis; L-threonine from L-aspartate: step 4/5. In terms of biological role, catalyzes the ATP-dependent phosphorylation of L-homoserine to L-homoserine phosphate. The polypeptide is Homoserine kinase (Klebsiella pneumoniae subsp. pneumoniae (strain ATCC 700721 / MGH 78578)).